Reading from the N-terminus, the 752-residue chain is Coiled-coil domain-containing protein 157 (752 aa).

Over residues 135–154 the composition is skewed to polar residues; it reads QQPLPQKGANQRETPTSKPT. Disordered regions lie at residues 135–163 and 316–336; these read QQPL…ARSP and QALK…EQCL. Coiled-coil stretches lie at residues 276-544 and 579-615; these read AAEQ…LLVA and DHME…VAQQ. A compositionally biased stretch (basic and acidic residues) spans 316–329; sequence QALKQEQGARRRQA. 2 disordered regions span residues 620-707 and 731-752; these read LIPQ…QPSK and RKRL…ERPM. Residues 628 to 648 are compositionally biased toward polar residues; that stretch reads SPSSKGTQGATPPVQAKSTSP. Residues 671–692 show a composition bias toward pro residues; it reads TSPPRQPCTSPPRQPCTSPPRQ. A compositionally biased stretch (polar residues) spans 693 to 707; the sequence is PCTSPSRQPCSQPSK.

The sequence is that of Coiled-coil domain-containing protein 157 (CCDC157) from Homo sapiens (Human).